Here is a 1310-residue protein sequence, read N- to C-terminus: Rho family-interacting cell polarization regulator 2 (1310 aa).

Residues S123 and S178 each carry the phosphoserine modification. The interval 196 to 254 (MHNLGHKNTNTPKEPQPKRVEEVYRALKNGLDEYLEFHQTELDKLTAQLKDMKRNSRLG) is involved in cell filopodia formation. A coiled-coil region spans residues 224–253 (NGLDEYLEFHQTELDKLTAQLKDMKRNSRL). S508 carries the post-translational modification Phosphoserine. The span at 588-608 (SSLSSQNEGTEDSSSASSRNS) shows a compositional bias: polar residues. Positions 588–639 (SSLSSQNEGTEDSSSASSRNSLGEDHEPKSHSKSDTVEPKKPSVDARSGTES) are disordered. The segment covering 609–631 (LGEDHEPKSHSKSDTVEPKKPSV) has biased composition (basic and acidic residues). The residue at position 682 (S682) is a Phosphoserine.

Belongs to the RIPOR family. In terms of assembly, homooligomer; homooligomerization is regulated by RHOC and leads to the formation of concatemers through the association of N- and C-termini. Interacts (phosphorylated form) with 14-3-3 proteins; these interactions occur during myogenic cell differentiation and also induces T cell proliferation arrest. Interacts (phosphorylated form) with HDAC6; this interaction occurs during early myogenic differentiation, prevents HDAC6 to deacetylate tubulin and also induces T cell proliferation arrest. Interacts with DYSF; this interaction occurs during early myogenic differentiation. Interacts with MYOF. Interacts (via active GTP- or inactive GDP-bound forms) with RHOA; this interaction is direct, blocks the loading of GTP to RHOA and decreases upon chemokine CCL19 stimulation in primary T lymphocytes. Interacts with RHOC. Interacts (via phosphorylated form) with YWHAB; this interaction occurs in a chemokine-dependent manner and does not compete for binding of RIPOR2 with RHOA nor blocks inhibition of RIPOR2-mediated RHOA activity. Interacts with YWHAE. Interacts with YWHAQ. Phosphorylated. Chemokine-induced phosphorylation in neutrophils occurs in a PKC- and AKT-dependent manner, resulting in RIPOR2 interaction with YWHAB and stabilization. Phosphorylated by PKCA, AKT1 and MAPKAPK1A; in vitro. In terms of tissue distribution, expressed in the cochlea (at protein level).

It is found in the cytoplasm. Its subcellular location is the cytoskeleton. It localises to the cell projection. The protein resides in the filopodium. The protein localises to the apical cell membrane. It is found in the stereocilium. Its subcellular location is the stereocilium membrane. In terms of biological role, acts as an inhibitor of the small GTPase RHOA and plays several roles in the regulation of myoblast and hair cell differentiation, lymphocyte T proliferation and neutrophil polarization. Plays a role in fetal mononuclear myoblast differentiation by promoting filopodia and myotube formation. Maintains naive T lymphocytes in a quiescent state and prevents chemokine-induced T lymphocyte responses, such as cell adhesion, polarization and migration. Involved also in the regulation of neutrophil polarization, chemotaxis and adhesion. Required for normal development of inner and outer hair cell stereocilia within the cochlea of the inner ear. Plays a role for maintaining the structural organization of the basal domain of stereocilia. Involved in mechanosensory hair cell function. Required for normal hearing. The protein is Rho family-interacting cell polarization regulator 2 of Rattus norvegicus (Rat).